The chain runs to 270 residues: Hydroxyethylthiazole kinase (270 aa).

Methionine 47 is a substrate binding site. The ATP site is built by arginine 123 and threonine 169. Glycine 196 is a binding site for substrate.

The protein belongs to the Thz kinase family. Requires Mg(2+) as cofactor.

It catalyses the reaction 5-(2-hydroxyethyl)-4-methylthiazole + ATP = 4-methyl-5-(2-phosphooxyethyl)-thiazole + ADP + H(+). The protein operates within cofactor biosynthesis; thiamine diphosphate biosynthesis; 4-methyl-5-(2-phosphoethyl)-thiazole from 5-(2-hydroxyethyl)-4-methylthiazole: step 1/1. In terms of biological role, catalyzes the phosphorylation of the hydroxyl group of 4-methyl-5-beta-hydroxyethylthiazole (THZ). The polypeptide is Hydroxyethylthiazole kinase (Roseiflexus sp. (strain RS-1)).